Here is an 89-residue protein sequence, read N- to C-terminus: uncharacterized protein (89 aa).

Residues 67–86 form a helical membrane-spanning segment; that stretch reads VYLSSMYICFILLAIWMTVW.

The protein localises to the membrane. This is an uncharacterized protein from Bacillus subtilis (strain 168).